We begin with the raw amino-acid sequence, 142 residues long: Hemoglobin subunit alpha-A (142 aa).

One can recognise a Globin domain in the interval 2–142 (VLSAADKTNV…VGTVLTAKYR (141 aa)). His-59 contacts O2. His-88 is a heme b binding site.

Belongs to the globin family. Heterotetramer of two alpha chains and two beta chains. As to expression, red blood cells.

Its function is as follows. Involved in oxygen transport from the lung to the various peripheral tissues. The polypeptide is Hemoglobin subunit alpha-A (HBAA) (Anser indicus (Bar-headed goose)).